We begin with the raw amino-acid sequence, 444 residues long: Tubulin beta 8B (444 aa).

The short motif at 1 to 4 (MREI) is the MREI motif element. Positions 11, 69, 138, 142, 143, and 144 each coordinate GTP. Glu69 contributes to the Mg(2+) binding site. The residue at position 172 (Ser172) is a Phosphoserine; by CDK1. Positions 204 and 226 each coordinate GTP. The tract at residues 421-444 (EYQQYQDATAEEEEDEEYAEEEVA) is disordered. A compositionally biased stretch (acidic residues) spans 429–444 (TAEEEEDEEYAEEEVA). Position 436 is a 5-glutamyl polyglutamate (Glu436).

It belongs to the tubulin family. Dimer of alpha and beta chains. A typical microtubule is a hollow water-filled tube with an outer diameter of 25 nm and an inner diameter of 15 nM. Alpha-beta heterodimers associate head-to-tail to form protofilaments running lengthwise along the microtubule wall with the beta-tubulin subunit facing the microtubule plus end conferring a structural polarity. Microtubules usually have 13 protofilaments but different protofilament numbers can be found in some organisms and specialized cells. Mg(2+) is required as a cofactor. Some glutamate residues at the C-terminus are polyglutamylated, resulting in polyglutamate chains on the gamma-carboxyl group. Polyglutamylation plays a key role in microtubule severing by spastin (SPAST). SPAST preferentially recognizes and acts on microtubules decorated with short polyglutamate tails: severing activity by SPAST increases as the number of glutamates per tubulin rises from one to eight, but decreases beyond this glutamylation threshold. Glutamylation is also involved in cilia motility. Post-translationally, some glutamate residues at the C-terminus are monoglycylated but not polyglycylated due to the absence of functional TTLL10 in human. Monoglycylation is mainly limited to tubulin incorporated into cilia and flagella axonemes, which is required for their stability and maintenance. Flagella glycylation controls sperm motility. Both polyglutamylation and monoglycylation can coexist on the same protein on adjacent residues, and lowering glycylation levels increases polyglutamylation, and reciprocally. In terms of processing, phosphorylated on Ser-172 by CDK1 during the cell cycle, from metaphase to telophase, but not in interphase. This phosphorylation inhibits tubulin incorporation into microtubules.

The protein resides in the cytoplasm. Its subcellular location is the cytoskeleton. In terms of biological role, tubulin is the major constituent of microtubules, a cylinder consisting of laterally associated linear protofilaments composed of alpha- and beta-tubulin heterodimers. Microtubules grow by the addition of GTP-tubulin dimers to the microtubule end, where a stabilizing cap forms. Below the cap, tubulin dimers are in GDP-bound state, owing to GTPase activity of alpha-tubulin. In Homo sapiens (Human), this protein is Tubulin beta 8B.